The following is a 320-amino-acid chain: Malate dehydrogenase (320 aa).

Residues 10–15 and D34 each bind NAD(+); that span reads GAGQIG. Residues R83 and R89 each coordinate substrate. Residues N96 and 119-121 contribute to the NAD(+) site; that span reads ITN. 2 residues coordinate substrate: N121 and R152. H176 acts as the Proton acceptor in catalysis.

The protein belongs to the LDH/MDH superfamily. MDH type 3 family.

It carries out the reaction (S)-malate + NAD(+) = oxaloacetate + NADH + H(+). Its function is as follows. Catalyzes the reversible oxidation of malate to oxaloacetate. This Methylobacterium radiotolerans (strain ATCC 27329 / DSM 1819 / JCM 2831 / NBRC 15690 / NCIMB 10815 / 0-1) protein is Malate dehydrogenase.